The following is a 336-amino-acid chain: Holliday junction branch migration complex subunit RuvB (336 aa).

The tract at residues 1 to 182 is large ATPase domain (RuvB-L); sequence MKERIVNLET…FGMSFRMQFY (182 aa). ATP is bound by residues Leu21, Arg22, Gly63, Lys66, Thr67, Ser68, 129–131, Arg172, Tyr182, and Arg219; that span reads EDF. A Mg(2+)-binding site is contributed by Thr67. The small ATPAse domain (RuvB-S) stretch occupies residues 183–253; sequence NPSELALIIK…ITLHALNELG (71 aa). A head domain (RuvB-H) region spans residues 256–336; it reads ELGFDEADLA…IPTLNPQTLF (81 aa). The DNA site is built by Arg310 and Arg315.

This sequence belongs to the RuvB family. As to quaternary structure, homohexamer. Forms an RuvA(8)-RuvB(12)-Holliday junction (HJ) complex. HJ DNA is sandwiched between 2 RuvA tetramers; dsDNA enters through RuvA and exits via RuvB. An RuvB hexamer assembles on each DNA strand where it exits the tetramer. Each RuvB hexamer is contacted by two RuvA subunits (via domain III) on 2 adjacent RuvB subunits; this complex drives branch migration. In the full resolvosome a probable DNA-RuvA(4)-RuvB(12)-RuvC(2) complex forms which resolves the HJ.

Its subcellular location is the cytoplasm. It carries out the reaction ATP + H2O = ADP + phosphate + H(+). Functionally, the RuvA-RuvB-RuvC complex processes Holliday junction (HJ) DNA during genetic recombination and DNA repair, while the RuvA-RuvB complex plays an important role in the rescue of blocked DNA replication forks via replication fork reversal (RFR). RuvA specifically binds to HJ cruciform DNA, conferring on it an open structure. The RuvB hexamer acts as an ATP-dependent pump, pulling dsDNA into and through the RuvAB complex. RuvB forms 2 homohexamers on either side of HJ DNA bound by 1 or 2 RuvA tetramers; 4 subunits per hexamer contact DNA at a time. Coordinated motions by a converter formed by DNA-disengaged RuvB subunits stimulates ATP hydrolysis and nucleotide exchange. Immobilization of the converter enables RuvB to convert the ATP-contained energy into a lever motion, pulling 2 nucleotides of DNA out of the RuvA tetramer per ATP hydrolyzed, thus driving DNA branch migration. The RuvB motors rotate together with the DNA substrate, which together with the progressing nucleotide cycle form the mechanistic basis for DNA recombination by continuous HJ branch migration. Branch migration allows RuvC to scan DNA until it finds its consensus sequence, where it cleaves and resolves cruciform DNA. In Helicobacter pylori (strain ATCC 700392 / 26695) (Campylobacter pylori), this protein is Holliday junction branch migration complex subunit RuvB.